The primary structure comprises 81 residues: Conotoxin Eb11.3 (81 aa).

Positions 1–23 (MMFRLTSVWCLLVIVLLNSAVDG) are cleaved as a signal peptide. 4 cysteine pairs are disulfide-bonded: C27–C41, C34–C48, C40–C56, and C47–C62. L69 bears the Leucine amide mark. The propeptide occupies 73-81 (AQYKRFFRR).

Belongs to the conotoxin I2 superfamily. In terms of tissue distribution, expressed by the venom duct.

The protein localises to the secreted. This chain is Conotoxin Eb11.3, found in Conus eburneus (Ivory cone).